A 147-amino-acid polypeptide reads, in one-letter code: Large ribosomal subunit protein uL13 (147 aa).

Belongs to the universal ribosomal protein uL13 family. In terms of assembly, part of the 50S ribosomal subunit.

This protein is one of the early assembly proteins of the 50S ribosomal subunit, although it is not seen to bind rRNA by itself. It is important during the early stages of 50S assembly. This Lactobacillus delbrueckii subsp. bulgaricus (strain ATCC 11842 / DSM 20081 / BCRC 10696 / JCM 1002 / NBRC 13953 / NCIMB 11778 / NCTC 12712 / WDCM 00102 / Lb 14) protein is Large ribosomal subunit protein uL13.